Reading from the N-terminus, the 76-residue chain is Acyl carrier protein (76 aa).

Positions 2–76 (SDIAERVKKI…QAIDYIQSHT (75 aa)) constitute a Carrier domain. S36 is subject to O-(pantetheine 4'-phosphoryl)serine.

Belongs to the acyl carrier protein (ACP) family. In terms of processing, 4'-phosphopantetheine is transferred from CoA to a specific serine of apo-ACP by AcpS. This modification is essential for activity because fatty acids are bound in thioester linkage to the sulfhydryl of the prosthetic group.

The protein resides in the cytoplasm. It functions in the pathway lipid metabolism; fatty acid biosynthesis. In terms of biological role, carrier of the growing fatty acid chain in fatty acid biosynthesis. In Methylococcus capsulatus (strain ATCC 33009 / NCIMB 11132 / Bath), this protein is Acyl carrier protein.